The chain runs to 962 residues: Protein kinase ORF73 (962 aa).

Disordered stretches follow at residues 1–28 (MADR…NDRP) and 62–152 (STPA…RATT). Residues 81 to 90 (DSDDDDEEDN) show a composition bias toward acidic residues. Residues 143–152 (YDTTGRRATT) show a composition bias toward polar residues. The Protein kinase domain maps to 301–595 (LRAAPVLGKG…ASDLLKSPRY (295 aa)). Residues 307 to 315 (LGKGYFGTV) and Lys-324 contribute to the ATP site. Catalysis depends on Asp-434, which acts as the Proton acceptor.

It belongs to the protein kinase superfamily. Ser/Thr protein kinase family.

The enzyme catalyses L-seryl-[protein] + ATP = O-phospho-L-seryl-[protein] + ADP + H(+). It catalyses the reaction L-threonyl-[protein] + ATP = O-phospho-L-threonyl-[protein] + ADP + H(+). The polypeptide is Protein kinase ORF73 (ORF73) (Ictaluridae (bullhead catfishes)).